A 328-amino-acid polypeptide reads, in one-letter code: Phosphatidylglycerol--prolipoprotein diacylglyceryl transferase (328 aa).

The next 3 helical transmembrane spans lie at 15 to 35 (VIQG…ILIS), 57 to 77 (IFMF…STLV), and 106 to 126 (GMAI…TINT). R156 contacts a 1,2-diacyl-sn-glycero-3-phospho-(1'-sn-glycerol). 2 consecutive transmembrane segments (helical) span residues 242-262 (GFIF…IEYL) and 289-309 (ISMG…WIIV).

It belongs to the Lgt family.

The protein resides in the cell inner membrane. It catalyses the reaction L-cysteinyl-[prolipoprotein] + a 1,2-diacyl-sn-glycero-3-phospho-(1'-sn-glycerol) = an S-1,2-diacyl-sn-glyceryl-L-cysteinyl-[prolipoprotein] + sn-glycerol 1-phosphate + H(+). The protein operates within protein modification; lipoprotein biosynthesis (diacylglyceryl transfer). Its function is as follows. Catalyzes the transfer of the diacylglyceryl group from phosphatidylglycerol to the sulfhydryl group of the N-terminal cysteine of a prolipoprotein, the first step in the formation of mature lipoproteins. The sequence is that of Phosphatidylglycerol--prolipoprotein diacylglyceryl transferase from Borreliella burgdorferi (strain ATCC 35210 / DSM 4680 / CIP 102532 / B31) (Borrelia burgdorferi).